The chain runs to 277 residues: Large ribosomal subunit protein uL2 (277 aa).

Disordered stretches follow at residues 36-55 (PLPK…RHHG) and 213-277 (WKGI…RKKK).

The protein belongs to the universal ribosomal protein uL2 family. In terms of assembly, part of the 50S ribosomal subunit. Forms a bridge to the 30S subunit in the 70S ribosome.

Functionally, one of the primary rRNA binding proteins. Required for association of the 30S and 50S subunits to form the 70S ribosome, for tRNA binding and peptide bond formation. It has been suggested to have peptidyltransferase activity; this is somewhat controversial. Makes several contacts with the 16S rRNA in the 70S ribosome. The chain is Large ribosomal subunit protein uL2 from Staphylococcus saprophyticus subsp. saprophyticus (strain ATCC 15305 / DSM 20229 / NCIMB 8711 / NCTC 7292 / S-41).